A 76-amino-acid polypeptide reads, in one-letter code: Conotoxin PnMKLT1-1111 (76 aa).

The first 22 residues, 1-22 (MKLTCMMIVAVLFLTAWTVVTA), serve as a signal peptide directing secretion. The propeptide occupies 23 to 50 (VPHSNKRLANLYLKARHEMKNPEASNVD). Cystine bridges form between C53-C67, C60-C71, and C66-C75.

It belongs to the conotoxin O1 superfamily. Expressed by the venom duct.

The protein localises to the secreted. The chain is Conotoxin PnMKLT1-1111 from Conus pennaceus (Feathered cone).